The chain runs to 442 residues: Proline--tRNA ligase (442 aa).

This sequence belongs to the class-II aminoacyl-tRNA synthetase family. ProS type 2 subfamily. Homodimer.

It is found in the cytoplasm. The catalysed reaction is tRNA(Pro) + L-proline + ATP = L-prolyl-tRNA(Pro) + AMP + diphosphate. In terms of biological role, catalyzes the attachment of proline to tRNA(Pro) in a two-step reaction: proline is first activated by ATP to form Pro-AMP and then transferred to the acceptor end of tRNA(Pro). The polypeptide is Proline--tRNA ligase (Brucella anthropi (strain ATCC 49188 / DSM 6882 / CCUG 24695 / JCM 21032 / LMG 3331 / NBRC 15819 / NCTC 12168 / Alc 37) (Ochrobactrum anthropi)).